We begin with the raw amino-acid sequence, 503 residues long: Probable protein kinase UbiB (503 aa).

The helical transmembrane segment at 13 to 35 threads the bilayer; it reads TFYRYRLAGLCASLMGSGWICAL. A Protein kinase domain is found at 120 to 491; the sequence is EFETEPIASA…QQRQSLWLAV (372 aa). Residues 126-134 and K148 contribute to the ATP site; that span reads IASASIAQV. D283 functions as the Proton acceptor in the catalytic mechanism. The chain crosses the membrane as a helical span at residues 485-502; that stretch reads QSLWLAVIAVVLLLILLL.

Belongs to the ABC1 family. UbiB subfamily.

Its subcellular location is the cell inner membrane. It functions in the pathway cofactor biosynthesis; ubiquinone biosynthesis [regulation]. In terms of biological role, is probably a protein kinase regulator of UbiI activity which is involved in aerobic coenzyme Q (ubiquinone) biosynthesis. This Neisseria meningitidis serogroup B (strain ATCC BAA-335 / MC58) protein is Probable protein kinase UbiB.